Here is a 130-residue protein sequence, read N- to C-terminus: MTQVPDNLKYNRTHEWTRLEDDGTLTIGITDHAQSELGDLVFVETPTVGRHYDAEEACAVVESVKAASDIYAPVGGEVIEANSELQDSPELVNTDPYGEGWIMRIRPDDSDDLEQLLDPEDYQDLVADEE.

Residues 24-106 (TLTIGITDHA…YGEGWIMRIR (83 aa)) enclose the Lipoyl-binding domain. At Lys-65 the chain carries N6-lipoyllysine. The segment at 111 to 130 (DDLEQLLDPEDYQDLVADEE) is disordered.

Belongs to the GcvH family. The glycine cleavage system is composed of four proteins: P, T, L and H. It depends on (R)-lipoate as a cofactor.

In terms of biological role, the glycine cleavage system catalyzes the degradation of glycine. The H protein shuttles the methylamine group of glycine from the P protein to the T protein. This Alkalilimnicola ehrlichii (strain ATCC BAA-1101 / DSM 17681 / MLHE-1) protein is Glycine cleavage system H protein.